The following is a 397-amino-acid chain: MQKKTLSDISCKGKRILMRVDFNVPLDLNGTITNDKRIIEALPSIRQVLETGGRLILMSHLGRPKGKVTPELSLAPVARRLSELLDTDVVMANNCIGTEAMQQALALQDGEVMMLENLRFHPEEEKNDPEFARELASMGEIYVNDAFGTAHRAHASTEGICHYVPISVAGFLIEKELRYLGNALANPERPFLAILGGAKISGKIDVLDNLFDKVDTILIGGAMIFTFFKAQGYQVGTSLVEEDKIELAKHLLEKAAAKNIRMLLPEDVIAASAFSADAETATVPIDSIPETMMGLDIGPKTIDTYSREILKARTIVWNGPMGVFEIDAFATGTIAIAHALADATAKGAISIIGGGDSAAAVMKAGLESGITHISTGGGASLEFLEGKELPGIAALND.

Residues 21–23 (DFN), arginine 37, 60–63 (HLGR), arginine 119, and arginine 152 contribute to the substrate site. ATP contacts are provided by residues lysine 203, glycine 294, glutamate 325, and 354 to 357 (GGDS).

It belongs to the phosphoglycerate kinase family. In terms of assembly, monomer.

It localises to the cytoplasm. It carries out the reaction (2R)-3-phosphoglycerate + ATP = (2R)-3-phospho-glyceroyl phosphate + ADP. It functions in the pathway carbohydrate degradation; glycolysis; pyruvate from D-glyceraldehyde 3-phosphate: step 2/5. The protein is Phosphoglycerate kinase of Prosthecochloris aestuarii (strain DSM 271 / SK 413).